Reading from the N-terminus, the 473-residue chain is uncharacterized protein (473 aa).

Residues 26-254 (PKLYIASSGV…KMSEIFNSFG (229 aa)) form the SET domain.

This is an uncharacterized protein from Schizosaccharomyces pombe (strain 972 / ATCC 24843) (Fission yeast).